A 480-amino-acid chain; its full sequence is Wax ester synthase/diacylglycerol acyltransferase 7 (480 aa).

At 1–193 (MTYGEEEPVS…LRSIFTIGST (193 aa)) the chain is on the cytoplasmic side. Catalysis depends on histidine 135, which acts as the Proton acceptor. A helical transmembrane segment spans residues 194–214 (MRLLWNTTIDMLLLLATVLFL). Over 215–329 (KDTKTPLKAG…VKDSKCRWGN (115 aa)) the chain is Lumenal. Asparagine 252 is a glycosylation site (N-linked (GlcNAc...) asparagine). A helical membrane pass occupies residues 330-350 (YFSFIFLPFTIGLQTDPLVYL). Residues 351–365 (KMSKSMMARKKHSYH) lie on the Cytoplasmic side of the membrane. Residues 366–386 (AALVYFIIKIVLKVFGAKAAA) form a helical membrane-spanning segment. Over 387-480 (ELFDRPVRNT…KASLCERGLL (94 aa)) the chain is Lumenal. The N-linked (GlcNAc...) asparagine glycan is linked to asparagine 395.

This sequence in the N-terminal section; belongs to the long-chain O-acyltransferase family. Expressed in roots, stems, leaves, flowers and siliques.

Its subcellular location is the cell membrane. The protein localises to the endoplasmic reticulum membrane. The protein resides in the golgi apparatus membrane. It catalyses the reaction an acyl-CoA + a 1,2-diacyl-sn-glycerol = a triacyl-sn-glycerol + CoA. It carries out the reaction a long chain fatty alcohol + a fatty acyl-CoA = a wax ester + CoA. It participates in glycerolipid metabolism; triacylglycerol biosynthesis. It functions in the pathway lipid metabolism. Functionally, bifunctional wax ester synthase/diacylglycerol acyltransferase that uses acyl-CoAs with 14, 16 and 18 carbons as substrates, preferably in combination with 16:0ol alcohol. Involved in cuticular wax biosynthesis. In Arabidopsis thaliana (Mouse-ear cress), this protein is Wax ester synthase/diacylglycerol acyltransferase 7.